Here is a 337-residue protein sequence, read N- to C-terminus: N-acetyl-gamma-glutamyl-phosphate reductase (337 aa).

Residue cysteine 155 is part of the active site.

This sequence belongs to the NAGSA dehydrogenase family. Type 1 subfamily.

Its subcellular location is the cytoplasm. The catalysed reaction is N-acetyl-L-glutamate 5-semialdehyde + phosphate + NADP(+) = N-acetyl-L-glutamyl 5-phosphate + NADPH + H(+). It functions in the pathway amino-acid biosynthesis; L-arginine biosynthesis; N(2)-acetyl-L-ornithine from L-glutamate: step 3/4. Catalyzes the NADPH-dependent reduction of N-acetyl-5-glutamyl phosphate to yield N-acetyl-L-glutamate 5-semialdehyde. This is N-acetyl-gamma-glutamyl-phosphate reductase from Alteromonas mediterranea (strain DSM 17117 / CIP 110805 / LMG 28347 / Deep ecotype).